Here is a 257-residue protein sequence, read N- to C-terminus: Glucose-1-phosphate cytidylyltransferase (257 aa).

Residues 6 to 10 (LAGGL), 11 to 13 (GTR), Lys23, Ser104, Arg109, and Gly128 each bind substrate. Residues Asp129 and Asp234 each coordinate Mg(2+).

It belongs to the glucose-1-phosphate cytidylyltransferase family. In terms of assembly, homohexamer. Requires Mg(2+) as cofactor.

It carries out the reaction alpha-D-glucose 1-phosphate + CTP + H(+) = CDP-D-glucose + diphosphate. It participates in nucleotide-sugar biosynthesis; CDP-3,6-dideoxy-D-mannose biosynthesis; CDP-3,6-dideoxy-D-mannose from CTP and alpha-D-glucose 1-phosphate: step 1/5. It functions in the pathway bacterial outer membrane biogenesis; LPS O-antigen biosynthesis. Involved in the biosynthesis of the tyvelose, a 3,6-dideoxyhexose found in the O-antigen of the surface lipopolysaccharides. It catalyzes the transfer of a CMP moiety from CTP to glucose 1-phosphate. This enzyme can utilize either CTP or UTP as the nucleotide donor. The polypeptide is Glucose-1-phosphate cytidylyltransferase (rfbF) (Salmonella typhi).